A 740-amino-acid chain; its full sequence is Elongation factor 2 (740 aa).

The tr-type G domain maps to 18–263 (EQVRNIGIIA…MVVRWVPNPR (246 aa)). GTP is bound by residues 27–34 (AHVDHGKT), 93–97 (DTPGH), and 147–150 (NKVD). Diphthamide is present on His-606.

It belongs to the TRAFAC class translation factor GTPase superfamily. Classic translation factor GTPase family. EF-G/EF-2 subfamily.

It localises to the cytoplasm. Catalyzes the GTP-dependent ribosomal translocation step during translation elongation. During this step, the ribosome changes from the pre-translocational (PRE) to the post-translocational (POST) state as the newly formed A-site-bound peptidyl-tRNA and P-site-bound deacylated tRNA move to the P and E sites, respectively. Catalyzes the coordinated movement of the two tRNA molecules, the mRNA and conformational changes in the ribosome. This chain is Elongation factor 2, found in Ignicoccus hospitalis (strain KIN4/I / DSM 18386 / JCM 14125).